Consider the following 393-residue polypeptide: Acetate kinase (393 aa).

Asparagine 6 lines the Mg(2+) pocket. Lysine 13 lines the ATP pocket. Arginine 87 contributes to the substrate binding site. The active-site Proton donor/acceptor is the aspartate 143. Residues 203 to 207 (HLGNG), 278 to 280 (DMR), and 326 to 330 (GIGEN) each bind ATP. Mg(2+) is bound at residue glutamate 380.

This sequence belongs to the acetokinase family. In terms of assembly, homodimer. Requires Mg(2+) as cofactor. Mn(2+) is required as a cofactor.

It is found in the cytoplasm. The catalysed reaction is acetate + ATP = acetyl phosphate + ADP. It participates in metabolic intermediate biosynthesis; acetyl-CoA biosynthesis; acetyl-CoA from acetate: step 1/2. In terms of biological role, catalyzes the formation of acetyl phosphate from acetate and ATP. Can also catalyze the reverse reaction. This chain is Acetate kinase, found in Mycoplasma mycoides subsp. mycoides SC (strain CCUG 32753 / NCTC 10114 / PG1).